Consider the following 367-residue polypeptide: Chorismate synthase (367 aa).

Arginine 48 is a binding site for NADP(+). FMN is bound by residues 125–127 (RSS), 243–244 (NA), glycine 283, 298–302 (KPTSS), and arginine 324.

The protein belongs to the chorismate synthase family. In terms of assembly, homotetramer. Requires FMNH2 as cofactor.

The enzyme catalyses 5-O-(1-carboxyvinyl)-3-phosphoshikimate = chorismate + phosphate. The protein operates within metabolic intermediate biosynthesis; chorismate biosynthesis; chorismate from D-erythrose 4-phosphate and phosphoenolpyruvate: step 7/7. Functionally, catalyzes the anti-1,4-elimination of the C-3 phosphate and the C-6 proR hydrogen from 5-enolpyruvylshikimate-3-phosphate (EPSP) to yield chorismate, which is the branch point compound that serves as the starting substrate for the three terminal pathways of aromatic amino acid biosynthesis. This reaction introduces a second double bond into the aromatic ring system. The sequence is that of Chorismate synthase from Psychrobacter sp. (strain PRwf-1).